Here is a 237-residue protein sequence, read N- to C-terminus: Probable Bax inhibitor 1 (237 aa).

Residues methionine 1 to asparagine 29 are Cytoplasmic-facing. The chain crosses the membrane as a helical span at residues valine 30–valine 50. At threonine 51–arginine 52 the chain is on the lumenal side. The helical transmembrane segment at leucine 53 to methionine 73 threads the bilayer. Residues threonine 74–alanine 86 are Cytoplasmic-facing. A helical transmembrane segment spans residues isoleucine 87–isoleucine 107. The Lumenal segment spans residues alanine 108 to serine 112. Residues isoleucine 113 to leucine 133 form a helical membrane-spanning segment. At tyrosine 134–serine 139 the chain is on the cytoplasmic side. A helical transmembrane segment spans residues tyrosine 140–methionine 160. Residues asparagine 161–serine 166 lie on the Lumenal side of the membrane. A helical transmembrane segment spans residues valine 167–residue 187. Over aspartate 188–histidine 206 the chain is Cytoplasmic. Residues serine 207–leucine 227 constitute an intramembrane region (helical). At asparagine 228–lysine 237 the chain is on the cytoplasmic side.

It belongs to the BI1 family. In terms of tissue distribution, highly abundant in testis.

It is found in the endoplasmic reticulum membrane. Functionally, suppressor of apoptosis. Modulates unfolded protein response signaling. Modulate ER calcium homeostasis by acting as a calcium-leak channel. In Paralichthys olivaceus (Bastard halibut), this protein is Probable Bax inhibitor 1 (tmbim6).